The sequence spans 273 residues: Ribosomal RNA small subunit methyltransferase I (273 aa).

This sequence belongs to the methyltransferase superfamily. RsmI family.

The protein localises to the cytoplasm. The enzyme catalyses cytidine(1402) in 16S rRNA + S-adenosyl-L-methionine = 2'-O-methylcytidine(1402) in 16S rRNA + S-adenosyl-L-homocysteine + H(+). Catalyzes the 2'-O-methylation of the ribose of cytidine 1402 (C1402) in 16S rRNA. This chain is Ribosomal RNA small subunit methyltransferase I, found in Xylella fastidiosa (strain Temecula1 / ATCC 700964).